A 279-amino-acid polypeptide reads, in one-letter code: Alcohol dehydrogenase-related 31 kDa protein (279 aa).

Position 11 to 34 (11 to 34 (YVADCGGIALETSKVLMTKNIAKL)) interacts with NAD(+). Ser139 is a binding site for substrate. Catalysis depends on Tyr152, which acts as the Proton acceptor.

The protein belongs to the short-chain dehydrogenases/reductases (SDR) family.

This Drosophila guanche (Fruit fly) protein is Alcohol dehydrogenase-related 31 kDa protein (Adhr).